A 614-amino-acid polypeptide reads, in one-letter code: Glutamyl-tRNA(Gln) amidotransferase subunit E (614 aa).

Belongs to the GatB/GatE family. GatE subfamily. In terms of assembly, heterodimer of GatD and GatE.

The catalysed reaction is L-glutamyl-tRNA(Gln) + L-glutamine + ATP + H2O = L-glutaminyl-tRNA(Gln) + L-glutamate + ADP + phosphate + H(+). Its function is as follows. Allows the formation of correctly charged Gln-tRNA(Gln) through the transamidation of misacylated Glu-tRNA(Gln) in organisms which lack glutaminyl-tRNA synthetase. The reaction takes place in the presence of glutamine and ATP through an activated gamma-phospho-Glu-tRNA(Gln). The GatDE system is specific for glutamate and does not act on aspartate. This Methanospirillum hungatei JF-1 (strain ATCC 27890 / DSM 864 / NBRC 100397 / JF-1) protein is Glutamyl-tRNA(Gln) amidotransferase subunit E.